Consider the following 145-residue polypeptide: D-aminoacyl-tRNA deacylase (145 aa).

The short motif at 137–138 (GP) is the Gly-cisPro motif, important for rejection of L-amino acids element.

The protein belongs to the DTD family. As to quaternary structure, homodimer.

It is found in the cytoplasm. The catalysed reaction is glycyl-tRNA(Ala) + H2O = tRNA(Ala) + glycine + H(+). It catalyses the reaction a D-aminoacyl-tRNA + H2O = a tRNA + a D-alpha-amino acid + H(+). In terms of biological role, an aminoacyl-tRNA editing enzyme that deacylates mischarged D-aminoacyl-tRNAs. Also deacylates mischarged glycyl-tRNA(Ala), protecting cells against glycine mischarging by AlaRS. Acts via tRNA-based rather than protein-based catalysis; rejects L-amino acids rather than detecting D-amino acids in the active site. By recycling D-aminoacyl-tRNA to D-amino acids and free tRNA molecules, this enzyme counteracts the toxicity associated with the formation of D-aminoacyl-tRNA entities in vivo and helps enforce protein L-homochirality. This is D-aminoacyl-tRNA deacylase from Shewanella baltica (strain OS155 / ATCC BAA-1091).